The chain runs to 89 residues: MARSLRKGPFIDEHLIKKVLVAQEKNDRKPIKTWSRRSVVVPEMIGLTIAVHNGRVHVPVSINENMIGHKLGEFAITRTFKGHSGDRKV.

Belongs to the universal ribosomal protein uS19 family.

Its function is as follows. Protein S19 forms a complex with S13 that binds strongly to the 16S ribosomal RNA. The sequence is that of Small ribosomal subunit protein uS19 from Ruthia magnifica subsp. Calyptogena magnifica.